The primary structure comprises 121 residues: MAKLSAKDIIDSLKEMSMLEIKDLIEAIETEFGVSAAAPVAVAAAPAGGAAAPSEVTVTLKDVGGNKVAVIKVVREITGLGLMEAKALVDNAPSKVKEGVKLADAENMKKQFAEAGATVEW.

This sequence belongs to the bacterial ribosomal protein bL12 family. In terms of assembly, homodimer. Part of the ribosomal stalk of the 50S ribosomal subunit. Forms a multimeric L10(L12)X complex, where L10 forms an elongated spine to which 2 to 4 L12 dimers bind in a sequential fashion. Binds GTP-bound translation factors.

Forms part of the ribosomal stalk which helps the ribosome interact with GTP-bound translation factors. Is thus essential for accurate translation. In Malacoplasma penetrans (strain HF-2) (Mycoplasma penetrans), this protein is Large ribosomal subunit protein bL12.